The sequence spans 751 residues: Glutathione biosynthesis bifunctional protein GshAB (751 aa).

The tract at residues 1-336 (MELDAVGKAI…QADQLTRQVL (336 aa)) is glutamate--cysteine ligase.

The protein in the N-terminal section; belongs to the glutamate--cysteine ligase type 1 family. Type 2 subfamily. Monomer.

The catalysed reaction is L-cysteine + L-glutamate + ATP = gamma-L-glutamyl-L-cysteine + ADP + phosphate + H(+). The enzyme catalyses gamma-L-glutamyl-L-cysteine + glycine + ATP = glutathione + ADP + phosphate + H(+). It participates in sulfur metabolism; glutathione biosynthesis; glutathione from L-cysteine and L-glutamate: step 1/2. The protein operates within sulfur metabolism; glutathione biosynthesis; glutathione from L-cysteine and L-glutamate: step 2/2. Functionally, synthesizes glutathione from L-glutamate and L-cysteine via gamma-L-glutamyl-L-cysteine. The chain is Glutathione biosynthesis bifunctional protein GshAB (gshAB) from Lactiplantibacillus plantarum (strain ATCC BAA-793 / NCIMB 8826 / WCFS1) (Lactobacillus plantarum).